A 142-amino-acid polypeptide reads, in one-letter code: Mediator of RNA polymerase II transcription subunit 9 (142 aa).

Residues methionine 1–asparagine 58 are disordered. Residue alanine 2 is modified to N-acetylalanine. A compositionally biased stretch (pro residues) spans glutamine 17–glutamine 49. A coiled-coil region spans residues aspartate 78 to leucine 134. Serine 106 carries the phosphoserine modification.

Belongs to the Mediator complex subunit 9 family. As to quaternary structure, component of the Mediator complex, which is composed of MED1, MED4, MED6, MED7, MED8, MED9, MED10, MED11, MED12, MED13, MED13L, MED14, MED15, MED16, MED17, MED18, MED19, MED20, MED21, MED22, MED23, MED24, MED25, MED26, MED27, MED29, MED30, MED31, CCNC, CDK8 and CDC2L6/CDK11. The MED12, MED13, CCNC and CDK8 subunits form a distinct module termed the CDK8 module. Mediator containing the CDK8 module is less active than Mediator lacking this module in supporting transcriptional activation. Individual preparations of the Mediator complex lacking one or more distinct subunits have been variously termed ARC, CRSP, DRIP, PC2, SMCC and TRAP.

Its subcellular location is the nucleus. In terms of biological role, component of the Mediator complex, a coactivator involved in the regulated transcription of nearly all RNA polymerase II-dependent genes. Mediator functions as a bridge to convey information from gene-specific regulatory proteins to the basal RNA polymerase II transcription machinery. Mediator is recruited to promoters by direct interactions with regulatory proteins and serves as a scaffold for the assembly of a functional preinitiation complex with RNA polymerase II and the general transcription factors. The polypeptide is Mediator of RNA polymerase II transcription subunit 9 (Med9) (Mus musculus (Mouse)).